A 116-amino-acid chain; its full sequence is Large ribosomal subunit protein uL22c (116 aa).

It belongs to the universal ribosomal protein uL22 family. As to quaternary structure, part of the 50S ribosomal subunit.

The protein resides in the plastid. The protein localises to the chloroplast. This protein binds specifically to 23S rRNA. Its function is as follows. The globular domain of the protein is located near the polypeptide exit tunnel on the outside of the subunit, while an extended beta-hairpin is found that lines the wall of the exit tunnel in the center of the 70S ribosome. The sequence is that of Large ribosomal subunit protein uL22c (rpl22) from Porphyra purpurea (Red seaweed).